A 229-amino-acid polypeptide reads, in one-letter code: Ribonuclease T (229 aa).

The Exonuclease domain maps to 23–197 (VIIDVETAGF…YDTERTAKLF (175 aa)). 4 residues coordinate Mg(2+): D26, E28, H184, and D189. H184 functions as the Proton donor/acceptor in the catalytic mechanism.

Belongs to the RNase T family. In terms of assembly, homodimer. It depends on Mg(2+) as a cofactor.

Its function is as follows. Trims short 3' overhangs of a variety of RNA species, leaving a one or two nucleotide 3' overhang. Responsible for the end-turnover of tRNA: specifically removes the terminal AMP residue from uncharged tRNA (tRNA-C-C-A). Also appears to be involved in tRNA biosynthesis. The sequence is that of Ribonuclease T from Haemophilus influenzae (strain ATCC 51907 / DSM 11121 / KW20 / Rd).